A 304-amino-acid polypeptide reads, in one-letter code: Eukaryotic translation initiation factor 2 subunit alpha (304 aa).

Residues 17–88 (DDIVMVNVQQ…EKGYIDLSKR (72 aa)) enclose the S1 motif domain. The residue at position 52 (Ser52) is a Phosphoserine; by GCN2. A disordered region spans residues 283-304 (LESKELDNRSDSEDDEDESDDE). The segment covering 284–293 (ESKELDNRSD) has biased composition (basic and acidic residues). A phosphoserine mark is found at Ser292 and Ser294. The segment covering 294 to 304 (SEDDEDESDDE) has biased composition (acidic residues).

It belongs to the eIF-2-alpha family. In terms of assembly, eukaryotic translation initiation factor 2 eIF2 is a heterotrimeric complex composed of an alpha, a beta and a gamma subunit. The factors eIF-1, eIF-2, eIF-3, TIF5/eIF-5 and methionyl-tRNAi form a multifactor complex (MFC) that may bind to the 40S ribosome. Interacts with CDC123; the interaction is direct. Interacts with GCD1. In terms of processing, phosphorylated; phosphorylation on Ser-52 by the GCN2 protein kinase occurs in response to low amino acid, carbon, or purine availability. Phosphorylation inhibits the guanine nucleotide exchange factor activity of the eIF2B complex.

The protein localises to the cytoplasm. It localises to the cytosol. EIF-2 functions in the early steps of protein synthesis by forming a ternary complex with GTP and initiator tRNA. This complex binds to a 40S ribosomal subunit, followed by mRNA binding to form a 43S pre-initiation complex. Junction of the 60S ribosomal subunit to form the 80S initiation complex is preceded by hydrolysis of the GTP bound to eIF-2 and release of an eIF-2-GDP binary complex. In order for eIF-2 to recycle and catalyze another round of initiation, the GDP bound to eIF-2 must exchange with GTP by way of a reaction catalyzed by eIF2B. The polypeptide is Eukaryotic translation initiation factor 2 subunit alpha (Saccharomyces cerevisiae (strain ATCC 204508 / S288c) (Baker's yeast)).